The primary structure comprises 359 residues: Peptide chain release factor 1 (359 aa).

An N5-methylglutamine modification is found at Q233.

It belongs to the prokaryotic/mitochondrial release factor family. Post-translationally, methylated by PrmC. Methylation increases the termination efficiency of RF1.

Its subcellular location is the cytoplasm. Its function is as follows. Peptide chain release factor 1 directs the termination of translation in response to the peptide chain termination codons UAG and UAA. This Ruminiclostridium cellulolyticum (strain ATCC 35319 / DSM 5812 / JCM 6584 / H10) (Clostridium cellulolyticum) protein is Peptide chain release factor 1.